We begin with the raw amino-acid sequence, 637 residues long: DNA gyrase subunit B (637 aa).

Residues S421 to P535 enclose the Toprim domain. Mg(2+)-binding residues include E427, D500, and D502.

It belongs to the type II topoisomerase GyrB family. In terms of assembly, heterotetramer, composed of two GyrA and two GyrB chains. In the heterotetramer, GyrA contains the active site tyrosine that forms a transient covalent intermediate with DNA, while GyrB binds cofactors and catalyzes ATP hydrolysis. Requires Mg(2+) as cofactor. Mn(2+) serves as cofactor. It depends on Ca(2+) as a cofactor.

It localises to the cytoplasm. The enzyme catalyses ATP-dependent breakage, passage and rejoining of double-stranded DNA.. In terms of biological role, a type II topoisomerase that negatively supercoils closed circular double-stranded (ds) DNA in an ATP-dependent manner to modulate DNA topology and maintain chromosomes in an underwound state. Negative supercoiling favors strand separation, and DNA replication, transcription, recombination and repair, all of which involve strand separation. Also able to catalyze the interconversion of other topological isomers of dsDNA rings, including catenanes and knotted rings. Type II topoisomerases break and join 2 DNA strands simultaneously in an ATP-dependent manner. This is DNA gyrase subunit B from Halalkalibacterium halodurans (strain ATCC BAA-125 / DSM 18197 / FERM 7344 / JCM 9153 / C-125) (Bacillus halodurans).